Reading from the N-terminus, the 276-residue chain is 2-dehydro-3-deoxyphosphooctonate aldolase (276 aa).

Belongs to the KdsA family.

It is found in the cytoplasm. The catalysed reaction is D-arabinose 5-phosphate + phosphoenolpyruvate + H2O = 3-deoxy-alpha-D-manno-2-octulosonate-8-phosphate + phosphate. The protein operates within carbohydrate biosynthesis; 3-deoxy-D-manno-octulosonate biosynthesis; 3-deoxy-D-manno-octulosonate from D-ribulose 5-phosphate: step 2/3. It functions in the pathway bacterial outer membrane biogenesis; lipopolysaccharide biosynthesis. The chain is 2-dehydro-3-deoxyphosphooctonate aldolase from Xylella fastidiosa (strain 9a5c).